Consider the following 248-residue polypeptide: Putative insertion sequence ATP-binding protein y4uH (248 aa).

106 to 113 (GPTGIGKS) provides a ligand contact to ATP.

It belongs to the IS21/IS1162 putative ATP-binding protein family.

The sequence is that of Putative insertion sequence ATP-binding protein y4uH from Sinorhizobium fredii (strain NBRC 101917 / NGR234).